A 378-amino-acid polypeptide reads, in one-letter code: Zinc transporter 7 (378 aa).

Over 1 to 37 the chain is Cytoplasmic; the sequence is MLPLSIKDDEYKPPRLNLFRKMSGWFRSILADKTSRN. A helical transmembrane segment spans residues 38-58; the sequence is LFFFLCLNLSFAFVELLYGVW. The Lumenal portion of the chain corresponds to 59 to 67; the sequence is SNSLGLISD. A helical membrane pass occupies residues 68 to 88; sequence SFHMFFDCTALLAGLAASVIS. Residues 89 to 102 lie on the Cytoplasmic side of the membrane; it reads KWRSNDAFSYGYVR. A helical transmembrane segment spans residues 103–123; that stretch reads AEVLAGFVNGLFLIFTAFFIF. Over 124-140 the chain is Lumenal; it reads SEGVERALEPPDVHHER. A helical transmembrane segment spans residues 141–161; sequence LLPVSILGFIVNLIGIFVFQH. Residues 161–223 are his-rich loop; it reads HGGHGHSHGS…HGQDYCHDDH (63 aa). Over 162–238 the chain is Cytoplasmic; the sequence is GGHGHSHGSG…TGSSKQILQG (77 aa). Residues 185 to 214 form a disordered region; that stretch reads HGHSHRGHGHSHEHKHGHTHDHGHSHGLSH. A compositionally biased stretch (basic residues) spans 186-211; sequence GHSHRGHGHSHEHKHGHTHDHGHSHG. A helical membrane pass occupies residues 239–259; that stretch reads VFLHIVADTLGSIGVIISAIL. Topologically, residues 260-264 are lumenal; the sequence is MQNYG. Residues 265–285 form a helical membrane-spanning segment; sequence LMIADPICSMLIALLIGVSIV. Residues 286–378 are Cytoplasmic-facing; the sequence is PLLKESIGIL…LYIQIDVAAM (93 aa).

It belongs to the cation diffusion facilitator (CDF) transporter (TC 2.A.4) family. SLC30A subfamily. In terms of assembly, homooligomer.

It localises to the golgi apparatus membrane. The protein resides in the cytoplasmic vesicle. The protein localises to the golgi apparatus. Its subcellular location is the trans-Golgi network. It is found in the sarcoplasmic reticulum. It localises to the mitochondrion. The catalysed reaction is Zn(2+)(in) = Zn(2+)(out). Its function is as follows. Zinc ion transporter mediating zinc entry from the cytosol into the lumen of organelles along the secretory pathway. By contributing to zinc ion homeostasis within the early secretory pathway, regulates the activation and folding of enzymes like alkaline phosphatases. In Gallus gallus (Chicken), this protein is Zinc transporter 7 (SLC30A7).